The sequence spans 270 residues: Methionine-rich protein (270 aa).

The first 18 residues, 1-18 (MLSLWAIGLLGLLNQVEA), serve as a signal peptide directing secretion. Residues 31–52 (QRSAQFSSSGWGTSPAAQNPWS) are compositionally biased toward polar residues. Positions 31–95 (QRSAQFSSSG…MPGSMPGAMP (65 aa)) are disordered. Residues 56–95 (PMPNTNMPNMNTGSLPGSMPGAMPGSMPGAMPGSMPGAMP) are compositionally biased toward low complexity.

In terms of tissue distribution, component of the acid-soluble organic matrix of calcified layers of the shell (at protein level).

It localises to the secreted. The sequence is that of Methionine-rich protein from Lottia gigantea (Giant owl limpet).